Here is a 704-residue protein sequence, read N- to C-terminus: Elongation factor G (704 aa).

The tr-type G domain maps to 9–285 (AKVRNIGIMA…AIVAYLPSPL (277 aa)). GTP contacts are provided by residues 18–25 (AHIDAGKT), 82–86 (DTPGH), and 136–139 (NKMD).

This sequence belongs to the TRAFAC class translation factor GTPase superfamily. Classic translation factor GTPase family. EF-G/EF-2 subfamily.

The protein localises to the cytoplasm. Catalyzes the GTP-dependent ribosomal translocation step during translation elongation. During this step, the ribosome changes from the pre-translocational (PRE) to the post-translocational (POST) state as the newly formed A-site-bound peptidyl-tRNA and P-site-bound deacylated tRNA move to the P and E sites, respectively. Catalyzes the coordinated movement of the two tRNA molecules, the mRNA and conformational changes in the ribosome. The sequence is that of Elongation factor G from Thermobifida fusca (strain YX).